The following is a 163-amino-acid chain: Cyclic pyranopterin monophosphate synthase (163 aa).

Residues 79 to 81 and 118 to 119 contribute to the substrate site; these read LCH and ME. Asp133 is an active-site residue.

The protein belongs to the MoaC family. As to quaternary structure, homohexamer; trimer of dimers.

The catalysed reaction is (8S)-3',8-cyclo-7,8-dihydroguanosine 5'-triphosphate = cyclic pyranopterin phosphate + diphosphate. It participates in cofactor biosynthesis; molybdopterin biosynthesis. In terms of biological role, catalyzes the conversion of (8S)-3',8-cyclo-7,8-dihydroguanosine 5'-triphosphate to cyclic pyranopterin monophosphate (cPMP). The chain is Cyclic pyranopterin monophosphate synthase from Nocardioides sp. (strain ATCC BAA-499 / JS614).